Consider the following 150-residue polypeptide: Macrodomain Ter protein (150 aa).

Belongs to the MatP family. In terms of assembly, homodimer.

It is found in the cytoplasm. Functionally, required for spatial organization of the terminus region of the chromosome (Ter macrodomain) during the cell cycle. Prevents early segregation of duplicated Ter macrodomains during cell division. Binds specifically to matS, which is a 13 bp signature motif repeated within the Ter macrodomain. This is Macrodomain Ter protein from Escherichia coli O6:K15:H31 (strain 536 / UPEC).